Reading from the N-terminus, the 386-residue chain is Nucleosome assembly protein 1-like 4 (386 aa).

Residues 1 to 28 are disordered; it reads MAENSLSDGGPADSVEAAKNASNTEKLT. Ala2 is modified (N-acetylalanine). Phosphoserine is present on residues Ser5, Ser7, and Ser49. Thr51 bears the Phosphothreonine mark. A phosphoserine mark is found at Ser53 and Ser54. A Phosphothreonine modification is found at Thr58. Lys105 bears the N6-acetyllysine mark. Phosphoserine is present on Ser125. Lys146 bears the N6-acetyllysine mark. The Nuclear localization signal motif lies at 265–271; that stretch reads IKKKQKH. Ser304 carries the post-translational modification Phosphoserine. Positions 339-370 are enriched in acidic residues; the sequence is AIEDDDNFEEGEEGEEEELEGDEEGEDEDDAD. The disordered stretch occupies residues 339–386; sequence AIEDDDNFEEGEEGEEEELEGDEEGEDEDDADVNPKKEPIQPAECKQQ.

This sequence belongs to the nucleosome assembly protein (NAP) family. In terms of assembly, interacts with core (H2A, H2B, H3, H4) and linker (H1) histones. Polyglutamylated and polyglycylated. These 2 modifications occur exclusively on glutamate residues and result in either polyglutamate or polyglycine chains on the gamma-carboxyl group. Both modifications can coexist on the same protein on adjacent residues, and lowering polyglycylation levels increases polyglutamylation, and reciprocally. Polyglutamylated by TTLL4. In terms of processing, phosphorylated at the G0/G1 boundary but it is not phosphorylated in S-phase. Phosphorylated protein remains in the cytoplasm in a complex with histones during the G0/G1 transition, whereas dephosphorylation triggers its transport into the nucleus at the G1/S-boundary.

It is found in the nucleus. The protein resides in the cytoplasm. Its function is as follows. Acts as a histone chaperone in nucleosome assembly. This Rattus norvegicus (Rat) protein is Nucleosome assembly protein 1-like 4 (Nap1l4).